The following is a 275-amino-acid chain: uncharacterized protein (275 aa).

This sequence belongs to the SMP-30/CGR1 family.

This is an uncharacterized protein from Sulfolobus acidocaldarius (strain ATCC 33909 / DSM 639 / JCM 8929 / NBRC 15157 / NCIMB 11770).